We begin with the raw amino-acid sequence, 2321 residues long: Neurogenic locus notch homolog protein 3 (2321 aa).

Over residues 1–14 (MGPGARGRRRRRRP) the composition is skewed to basic residues. The tract at residues 1 to 26 (MGPGARGRRRRRRPMSPPPPPPPVRA) is disordered. Positions 1–39 (MGPGARGRRRRRRPMSPPPPPPPVRALPLLLLLAGPGAA) are cleaved as a signal peptide. The span at 15–25 (MSPPPPPPPVR) shows a compositional bias: pro residues. EGF-like domains are found at residues 40–77 (APPC…ERCQ), 78–118 (LEDP…PDCS), and 119–156 (LPDP…RSCR). Residues 40–1643 (APPCLDGSPC…LEPPEPSVPL (1604 aa)) lie on the Extracellular side of the membrane. 99 cysteine pairs are disulfide-bonded: cysteine 43–cysteine 55, cysteine 49–cysteine 65, cysteine 67–cysteine 76, cysteine 82–cysteine 93, cysteine 87–cysteine 106, cysteine 108–cysteine 117, cysteine 123–cysteine 134, cysteine 128–cysteine 144, cysteine 146–cysteine 155, cysteine 162–cysteine 174, cysteine 168–cysteine 183, cysteine 185–cysteine 194, cysteine 201–cysteine 212, cysteine 206–cysteine 222, cysteine 224–cysteine 233, cysteine 240–cysteine 251, cysteine 245–cysteine 260, cysteine 262–cysteine 271, cysteine 278–cysteine 291, cysteine 285–cysteine 300, cysteine 302–cysteine 311, cysteine 318–cysteine 329, cysteine 323–cysteine 338, cysteine 340–cysteine 349, cysteine 355–cysteine 366, cysteine 360–cysteine 377, cysteine 379–cysteine 388, cysteine 395–cysteine 408, cysteine 402–cysteine 417, cysteine 419–cysteine 428, cysteine 435–cysteine 446, cysteine 440–cysteine 455, cysteine 457–cysteine 466, cysteine 473–cysteine 484, cysteine 478–cysteine 493, cysteine 495–cysteine 504, cysteine 511–cysteine 522, cysteine 516–cysteine 531, cysteine 533–cysteine 542, cysteine 549–cysteine 559, cysteine 554–cysteine 568, cysteine 570–cysteine 579, cysteine 586–cysteine 597, cysteine 591–cysteine 606, cysteine 608–cysteine 617, cysteine 624–cysteine 634, cysteine 629–cysteine 643, cysteine 645–cysteine 654, cysteine 661–cysteine 672, cysteine 666–cysteine 681, cysteine 683–cysteine 692, cysteine 699–cysteine 709, cysteine 704–cysteine 718, cysteine 720–cysteine 729, cysteine 738–cysteine 749, cysteine 743–cysteine 758, cysteine 760–cysteine 769, cysteine 775–cysteine 786, cysteine 780–cysteine 796, cysteine 798–cysteine 807, cysteine 814–cysteine 826, cysteine 820–cysteine 835, cysteine 837–cysteine 846, cysteine 853–cysteine 864, cysteine 858–cysteine 873, cysteine 875–cysteine 884, cysteine 891–cysteine 901, cysteine 896–cysteine 910, cysteine 912–cysteine 921, cysteine 928–cysteine 939, cysteine 933–cysteine 948, cysteine 950–cysteine 959, cysteine 966–cysteine 977, cysteine 971–cysteine 986, cysteine 988–cysteine 997, cysteine 1004–cysteine 1015, cysteine 1009–cysteine 1022, cysteine 1024–cysteine 1033, cysteine 1040–cysteine 1061, cysteine 1055–cysteine 1070, cysteine 1072–cysteine 1081, cysteine 1088–cysteine 1099, cysteine 1093–cysteine 1108, cysteine 1110–cysteine 1119, cysteine 1126–cysteine 1137, cysteine 1131–cysteine 1146, cysteine 1148–cysteine 1157, cysteine 1164–cysteine 1182, cysteine 1176–cysteine 1191, cysteine 1193–cysteine 1202, cysteine 1209–cysteine 1222, cysteine 1214–cysteine 1232, cysteine 1234–cysteine 1243, cysteine 1250–cysteine 1261, cysteine 1255–cysteine 1275, cysteine 1277–cysteine 1286, cysteine 1293–cysteine 1304, cysteine 1298–cysteine 1313, and cysteine 1315–cysteine 1324. The region spanning 158–195 (DVDECRVGEPCRHGGTCLNTPGSFRCQCPAGYTGPLCE) is the EGF-like 4; calcium-binding domain. An EGF-like 5 domain is found at 197 to 234 (PAVPCAPSPCRNGGTCRQSGDLTYDCACLPGFEGQNCE). The region spanning 236–272 (NVDDCPGHRCLNGGTCVDGVNTYNCQCPPEWTGQFCT) is the EGF-like 6; calcium-binding domain. The region spanning 274-312 (DVDECQLQPNACHNGGTCFNTLGGHSCVCVNGWTGESCS) is the EGF-like 7 domain. Positions 314–350 (NIDDCATAVCFHGATCHDRVASFYCACPMGKTGLLCH) constitute an EGF-like 8; calcium-binding domain. The EGF-like 9 domain maps to 351 to 389 (LDDACVSNPCHEDAICDTNPVNGRAICTCPPGFTGGACD). Residues 391–429 (DVDECSIGANPCEHLGRCVNTQGSFLCQCGRGYTGPRCE) enclose the EGF-like 10; calcium-binding domain. Residues 431–467 (DVNECLSGPCRNQATCLDRIGQFTCICMAGFTGTYCE) form the EGF-like 11; calcium-binding domain. The EGF-like 12; calcium-binding domain occupies 469–505 (DIDECQSSPCVNGGVCKDRVNGFSCTCPSGFSGSTCQ). Residues 507-543 (DVDECASTPCRNGAKCVDQPDGYECRCAEGFEGTLCD) form the EGF-like 13; calcium-binding domain. Residues 545–580 (NVDDCSPDPCHHGRCVDGIASFSCACAPGYTGTRCE) enclose the EGF-like 14; calcium-binding domain. The EGF-like 15; calcium-binding domain maps to 582 to 618 (QVDECRSQPCRHGGKCLDLVDKYLCRCPSGTTGVNCE). The region spanning 620-655 (NIDDCASNPCTFGVCRDGINRYDCVCQPGFTGPLCN) is the EGF-like 16; calcium-binding domain. The 37-residue stretch at 657 to 693 (EINECASSPCGEGGSCVDGENGFRCLCPPGSLPPLCL) folds into the EGF-like 17; calcium-binding domain. 3 EGF-like domains span residues 695 to 730 (PSHP…PRCS), 734 to 770 (ARDA…RQCE), and 771 to 808 (LLSP…PRCQ). The 38-residue stretch at 810–847 (DVDECAGPAPCGPHGICTNLAGSFSCTCHGGYTGPSCD) folds into the EGF-like 21; calcium-binding domain. The EGF-like 22; calcium-binding domain maps to 849 to 885 (DINDCDPNPCLNGGSCQDGVGSFSCSCLPGFAGPRCA). An EGF-like 23; calcium-binding domain is found at 887-922 (DVDECLSNPCGPGTCTDHVASFTCTCPPGYGGFHCE). EGF-like domains follow at residues 924 to 960 (DLPD…AHCQ), 962 to 998 (EADP…PQCQ), 1000 to 1034 (LVDW…RLCD), 1036 to 1082 (RSLP…SHCE), and 1084 to 1120 (EVDP…DNCE). Positions 1122–1158 (DVDECASQPCQHGGSCIDLVARYLCSCPPGTLGVLCE) constitute an EGF-like 29; calcium-binding domain. The EGF-like 30; calcium-binding domain maps to 1160–1203 (NEDDCGPGPPLDSGPRCLHNGTCVDLVGGFRCTCPPGYTGLRCE). N-linked (GlcNAc...) asparagine glycosylation occurs at asparagine 1179. EGF-like domains are found at residues 1205–1244 (DINE…PRCQ), 1246–1287 (VLSP…PRCE), 1289–1325 (VARS…PSCR), and 1335–1373 (SNAS…PRCE). An N-linked (GlcNAc...) asparagine glycan is attached at asparagine 1336. Cystine bridges form between cysteine 1339–cysteine 1350, cysteine 1344–cysteine 1361, cysteine 1363–cysteine 1372, cysteine 1387–cysteine 1410, cysteine 1392–cysteine 1405, cysteine 1401–cysteine 1417, cysteine 1428–cysteine 1451, cysteine 1433–cysteine 1446, cysteine 1442–cysteine 1458, cysteine 1467–cysteine 1493, cysteine 1475–cysteine 1488, and cysteine 1484–cysteine 1500. LNR repeat units lie at residues 1387–1427 (CPRA…PWRQ), 1428–1458 (CEAL…NFDC), and 1467–1505 (CNPV…SEVP). An N-linked (GlcNAc...) asparagine glycan is attached at asparagine 1438. A helical membrane pass occupies residues 1644–1664 (LPLLVAGAVLLLVILVLGVMV). Over 1665–2321 (ARRKREHSTL…EVTPKRQVLA (657 aa)) the chain is Cytoplasmic. 5 ANK repeats span residues 1838-1867 (TGET…DTNA), 1871-1901 (SGRT…DLDA), 1905-1934 (DGST…DVNA), 1938-1967 (LGKS…NKDM), and 1971-2000 (KEET…NREI). Positions 2024–2120 (LDQPSGPRSP…FGGPPASPGG (97 aa)) are disordered. A compositionally biased stretch (low complexity) spans 2039–2053 (LGPLLCPPGAFLPGL). Position 2174 is an omega-N-methylarginine (arginine 2174). Residues 2190-2321 (APGPQLLNPG…EVTPKRQVLA (132 aa)) are disordered. A compositionally biased stretch (low complexity) spans 2269 to 2289 (STPSPATATGAMATTTGALPA). The segment covering 2296 to 2308 (VPSSLAQAQTQLG) has biased composition (polar residues).

The protein belongs to the NOTCH family. In terms of assembly, heterodimer of a C-terminal fragment N(TM) and a N-terminal fragment N(EC) which are probably linked by disulfide bonds. Interacts with MAML1, MAML2 and MAML3 which act as transcriptional coactivators for NOTCH3. Interacts with PSMA1. Interacts with HIF1AN. In terms of processing, synthesized in the endoplasmic reticulum as an inactive form which is proteolytically cleaved by a furin-like convertase in the trans-Golgi network before it reaches the plasma membrane to yield an active, ligand-accessible form. Cleavage results in a C-terminal fragment N(TM) and a N-terminal fragment N(EC). Following ligand binding, it is cleaved by TNF-alpha converting enzyme (TACE) to yield a membrane-associated intermediate fragment called notch extracellular truncation (NEXT). This fragment is then cleaved by presenilin dependent gamma-secretase to release a notch-derived peptide containing the intracellular domain (NICD) from the membrane. Phosphorylated. Post-translationally, hydroxylated by HIF1AN. As to expression, ubiquitously expressed in fetal and adult tissues.

It localises to the cell membrane. Its subcellular location is the nucleus. Its function is as follows. Functions as a receptor for membrane-bound ligands Jagged1, Jagged2 and Delta1 to regulate cell-fate determination. Upon ligand activation through the released notch intracellular domain (NICD) it forms a transcriptional activator complex with RBPJ/RBPSUH and activates genes of the enhancer of split locus. Affects the implementation of differentiation, proliferation and apoptotic programs. This Homo sapiens (Human) protein is Neurogenic locus notch homolog protein 3 (NOTCH3).